Here is a 739-residue protein sequence, read N- to C-terminus: Xylosyl- and glucuronyltransferase LARGE2s (739 aa).

Residues 1–10 (MLCSWRVKLK) are Cytoplasmic-facing. The helical; Signal-anchor for type II membrane protein transmembrane segment at 11–31 (LLLATITLAVLLSWLYLFVGS) threads the bilayer. At 32–739 (LEYGRFLLLP…LKYLTAERNL (708 aa)) the chain is on the lumenal side. Residues 80–105 (AEGSDGNPQWAASAEDGPPLGGERNN) form a disordered region. Residues asparagine 105, asparagine 131, and asparagine 217 are each glycosylated (N-linked (GlcNAc...) asparagine). The xylosyltransferase activity stretch occupies residues 121–396 (LHVAIVCAGH…FLEYDGNLLR (276 aa)). Residues aspartate 225 and aspartate 227 each coordinate Mn(2+). An N-linked (GlcNAc...) asparagine glycan is attached at asparagine 255. Positions 397-739 (RELFGCASLP…LKYLTAERNL (343 aa)) are glucuronyltransferase activity. The Mn(2+) site is built by aspartate 546 and aspartate 548.

It in the C-terminal section; belongs to the glycosyltransferase 49 family. The protein in the N-terminal section; belongs to the glycosyltransferase 8 family. The cofactor is Mn(2+).

It localises to the golgi apparatus membrane. The enzyme catalyses 3-O-[beta-D-GlcA-(1-&gt;3)-beta-D-Xyl-(1-&gt;4)-Rib-ol-P-Rib-ol-P-3-beta-D-GalNAc-(1-&gt;3)-beta-D-GlcNAc-(1-&gt;4)-(O-6-P-alpha-D-Man)]-Thr-[protein] + UDP-alpha-D-xylose = 3-O-[alpha-D-Xyl-(1-&gt;3)-beta-D-GlcA-(1-&gt;4)-beta-D-Xyl-(1-&gt;4)-Rib-ol-P-Rib-ol-P-3-beta-D-GalNAc-(1-&gt;3)-beta-D-GlcNAc-(1-&gt;4)-(O-6-P-alpha-D-Man)]-Thr-[protein] + UDP + H(+). The catalysed reaction is 3-O-{(1-&gt;[3)-alpha-D-Xyl-(1-&gt;3)-beta-D-GlcA-(1-&gt;](n)-4)-beta-D-Xyl-(1-&gt;4)-Rib-ol-P-Rib-ol-P-3-beta-D-GalNAc-(1-&gt;3)-beta-D-GlcNAc-(1-&gt;4)-O-6-P-alpha-D-Man}-L-Thr-[protein] + UDP-alpha-D-glucuronate = 3-O-{beta-D-GlcA-(1-&gt;[3)-alpha-D-Xyl-(1-&gt;3)-beta-D-GlcA-(1-&gt;](n)-4)-beta-D-Xyl-(1-&gt;4)-Rib-ol-P-Rib-ol-P-3-beta-D-GalNAc-(1-&gt;3)-beta-D-GlcNAc-(1-&gt;4)-O-6-P-alpha-D-Man}-L-Thr-[protein] + UDP + H(+). It catalyses the reaction 3-O-{beta-D-GlcA-(1-&gt;[3)-alpha-D-Xyl-(1-&gt;3)-beta-D-GlcA-(1-&gt;](n)-4)-beta-D-Xyl-(1-&gt;4)-Rib-ol-P-Rib-ol-P-3-beta-D-GalNAc-(1-&gt;3)-beta-D-GlcNAc-(1-&gt;4)-O-6-P-alpha-D-Man}-L-Thr-[protein] + UDP-alpha-D-xylose = 3-O-{(1-&gt;[3)-alpha-D-Xyl-(1-&gt;3)-beta-D-GlcA-(1-&gt;](n+1)-4)-beta-D-Xyl-(1-&gt;4)-Rib-ol-P-Rib-ol-P-3-beta-D-GalNAc-(1-&gt;3)-beta-D-GlcNAc-(1-&gt;4)-O-6-P-alpha-D-Man}-L-Thr-[protein] + UDP + H(+). It participates in protein modification; protein glycosylation. Bifunctional glycosyltransferase with both alpha-1,3-xylosyltransferase and beta-1,3-glucuronyltransferase activities involved in the maturation of alpha-dystroglycan (DAG1) by glycosylation leading to DAG1 binding to laminin G-like domain-containing extracellular proteins with high affinity and in a phosphorylated-O-mannosyl trisaccharide dependent manner. Elongates the glucuronyl-beta-1,4-xylose-beta disaccharide primer structure by adding repeating units [-3-Xylose-alpha-1,3-GlcA-beta-1-] to produce a heteropolysaccharide. Supports the maturation of DAG1 more effectively than LARGE1. In addition, can modify both heparan sulfate (HS)- and chondroitin/dermatan sulfate (CS/DS)-proteoglycans (PGs), namely GPC4, with a glycosaminoglycan (GAG)-like polysaccharide composed of xylose and glucuronic acid to confer laminin binding. In Gallus gallus (Chicken), this protein is Xylosyl- and glucuronyltransferase LARGE2s.